The chain runs to 113 residues: Hemerythrin (113 aa).

Fe cation-binding residues include His-25, His-54, Glu-58, His-73, His-77, His-101, and Asp-106.

It belongs to the hemerythrin family. In terms of assembly, homooctamer.

Functionally, hemerythrin is a respiratory protein in blood cells of certain marine worms. The oxygen-binding site in each chain contains two iron atoms. This is Hemerythrin from Themiste dyscrita (Peanut worm).